Consider the following 143-residue polypeptide: Fluoride-specific ion channel FluC (143 aa).

The next 4 membrane-spanning stretches (helical) occupy residues 6–26, 38–58, 70–90, and 103–123; these read CILV…VSVL, TILI…LTLA, LFVM…SLQT, and MVNV…GHVV. Gly78 and Thr81 together coordinate Na(+).

This sequence belongs to the fluoride channel Fluc/FEX (TC 1.A.43) family.

The protein localises to the cell inner membrane. The catalysed reaction is fluoride(in) = fluoride(out). Na(+) is not transported, but it plays an essential structural role and its presence is essential for fluoride channel function. In terms of biological role, fluoride-specific ion channel. Important for reducing fluoride concentration in the cell, thus reducing its toxicity. The chain is Fluoride-specific ion channel FluC from Methylobacterium radiotolerans (strain ATCC 27329 / DSM 1819 / JCM 2831 / NBRC 15690 / NCIMB 10815 / 0-1).